Here is a 131-residue protein sequence, read N- to C-terminus: uncharacterized protein (131 aa).

This is an uncharacterized protein from Caenorhabditis elegans.